Consider the following 349-residue polypeptide: Flagellar P-ring protein (349 aa).

The first 16 residues, 1-16 (MKYFFIIALLLSSLYS), serve as a signal peptide directing secretion.

It belongs to the FlgI family. As to quaternary structure, the basal body constitutes a major portion of the flagellar organelle and consists of four rings (L,P,S, and M) mounted on a central rod.

It localises to the periplasm. Its subcellular location is the bacterial flagellum basal body. Functionally, assembles around the rod to form the L-ring and probably protects the motor/basal body from shearing forces during rotation. The sequence is that of Flagellar P-ring protein from Aliarcobacter butzleri (strain RM4018) (Arcobacter butzleri).